Consider the following 337-residue polypeptide: Probable E3 ubiquitin-protein ligase LUL1 (337 aa).

The N-myristoyl glycine moiety is linked to residue Gly2. The DAR2 domain stretch occupies residues 139 to 255; the sequence is FTFDASMPGR…GEIKIEVVKQ (117 aa). Residues 285–324 form an RING-type; atypical zinc finger; it reads CVVCLSEPRDTTVLPCRHMCMCSGCAKALRFQTNLCPVCR.

This sequence belongs to the RING-type zinc finger family. LOG2 subfamily. Post-translationally, myristoylated (in vitro).

It carries out the reaction S-ubiquitinyl-[E2 ubiquitin-conjugating enzyme]-L-cysteine + [acceptor protein]-L-lysine = [E2 ubiquitin-conjugating enzyme]-L-cysteine + N(6)-ubiquitinyl-[acceptor protein]-L-lysine.. It participates in protein modification; protein ubiquitination. Its function is as follows. Acts as an E3 ubiquitin-protein ligase, or as part of E3 complex, which accepts ubiquitin from specific E2 ubiquitin-conjugating enzymes and then transfers it to substrates (in vitro). The sequence is that of Probable E3 ubiquitin-protein ligase LUL1 (LUL1) from Arabidopsis thaliana (Mouse-ear cress).